The following is a 199-amino-acid chain: MTKILVLYYSMYGHIEALASAVAEGAKKVADVEVTIKRVPETIPPEAFTKAGGKVDQSAPVASVQELVDYDAIIIGTPTRFGNMAGQMRNFLDQTGGLWAEGKLYGKVASVFTSTGVGGGQEMTITSTWTTLAHHGFIIVPIGYGIPEIGDISQMQGGTPYGASTIADGDGSRIPNENELKIARYQGEHVAKIAKKLKD.

One can recognise a Flavodoxin-like domain in the interval 4-190 (ILVLYYSMYG…KIARYQGEHV (187 aa)). FMN-binding positions include 10 to 15 (SMYGHI) and 79 to 81 (TRF). Residue Tyr12 coordinates NAD(+). Trp99 provides a ligand contact to substrate. His134 is a binding site for FMN.

It belongs to the WrbA family. Requires FMN as cofactor.

The enzyme catalyses a quinone + NADH + H(+) = a quinol + NAD(+). It carries out the reaction a quinone + NADPH + H(+) = a quinol + NADP(+). The polypeptide is NAD(P)H dehydrogenase (quinone) (Photorhabdus laumondii subsp. laumondii (strain DSM 15139 / CIP 105565 / TT01) (Photorhabdus luminescens subsp. laumondii)).